Here is a 314-residue protein sequence, read N- to C-terminus: MARRRKGRPIDGVILLDKPTGMSSNDALQKVKRLYFAEKAGHTGALDPLATGMLPICLGEATKFSQFLLDSDKRYRVIAKLGERTDTSDSDGDVVETRPVNVTLETLEACIEKFRGESDQVPSMFSALKYQGKPLYEYARKGIEVPRESRKITVYEITLHRFEGEEVEMEVHCSKGTYIRTIVDDLGEMLGCGAHVTMLRRTGVAKYPYENMVTLEQLNELVDNANRDGVAPREVLDPLLMPMDTAVEDLPEVNLIADLADMVMHGQAVQVLGAPTEGQLRLTMGEERRFIGVGEMNRDGKIAPKRLVVFRDEE.

Catalysis depends on aspartate 47, which acts as the Nucleophile.

It belongs to the pseudouridine synthase TruB family. Type 1 subfamily.

The catalysed reaction is uridine(55) in tRNA = pseudouridine(55) in tRNA. In terms of biological role, responsible for synthesis of pseudouridine from uracil-55 in the psi GC loop of transfer RNAs. The polypeptide is tRNA pseudouridine synthase B (Vibrio vulnificus (strain CMCP6)).